Consider the following 208-residue polypeptide: Cytochrome c oxidase assembly protein CtaG (208 aa).

At 1-19 (MKQRPTGPDTTPRNRRGFG) the chain is on the cytoplasmic side. Residues 20-42 (RDTAVASVCGLVVALMVGASYAA) form a helical; Signal-anchor for type II membrane protein membrane-spanning segment. Topologically, residues 43–208 (VPFYNWFCRV…SEAGPRQGAL (166 aa)) are periplasmic.

The protein belongs to the COX11/CtaG family.

It is found in the cell inner membrane. Its function is as follows. Exerts its effect at some terminal stage of cytochrome c oxidase synthesis, probably by being involved in the insertion of the copper B into subunit I. This is Cytochrome c oxidase assembly protein CtaG from Rhodopseudomonas palustris (strain BisA53).